A 1242-amino-acid polypeptide reads, in one-letter code: DNA polymerase catalytic subunit (1242 aa).

Disordered regions lie at residues 14–38 (GAVAGGRRQRSQPGSAQGSGKRPPQ), 644–665 (LQSAPSSQDGVSPGSGSNSSSS), 877–898 (EGDSEESSALPEGLETSSGGSN), and 1108–1163 (TAPQ…KPPS). Over residues 653-665 (GVSPGSGSNSSSS) the composition is skewed to low complexity. Polar residues predominate over residues 1110-1119 (PQGSSDNGDS). Residues 1145–1155 (ESNRRGGEPAK) are compositionally biased toward basic and acidic residues.

Belongs to the DNA polymerase type-B family. In terms of assembly, forms a complex with the ssDNA-binding protein UL57, the DNA polymerase processivity factor UL44, and the alkaline exonuclease UL98. Interacts with the putative helicase-primase complex composed of UL70, UL102 and UL105 proteins; these interactions may coordinate leading and lagging strand DNA synthesis at the replication fork.

The protein resides in the host nucleus. The enzyme catalyses DNA(n) + a 2'-deoxyribonucleoside 5'-triphosphate = DNA(n+1) + diphosphate. Functionally, replicates viral genomic DNA in the late phase of lytic infection, producing long concatemeric DNA. The replication complex is composed of six viral proteins: the DNA polymerase, processivity factor, primase, primase-associated factor, helicase, and ssDNA-binding protein. The protein is DNA polymerase catalytic subunit (UL54) of Homo sapiens (Human).